A 443-amino-acid chain; its full sequence is MESLAALYKNHIVTLQERTRDALARFKLDALLIHSGELINVFLDDHPYPFKVNPQFKAWVPVTQVPNCWLLVDGVNKPKLWFYLPVDYWHNVEPLPTSFWTEEVEVIALPKADGIGSQLPAARGNIGYIGPVPERALQLDIAASNINPKGVIDYLHYYRAYKTDYELACMREAQKTAVNGHRAAEEAFRSGMSEFDINLAYLTATGHRDTDVPYSNIVALNEHASVLHYTKLDHRAPSEMRSFLLDAGAEYNGYAADLTRTWAANNDTDYAQLIKDVNDEQLALIATMKAGVSYVDYHIQFHQRIAKLLRKHQIVTDISEEAMVENNLTGPFMPHGIGHQLGLQVHDVAGFMQDDTGTHLAAPSKYPYLRCTRVLQPRMVLTIEPGIYFIESLLAPWREGQFSKHFNWQKIEALKPFGGIRIEDNVVIHENGVENMTRDLKLA.

Aspartate 246, aspartate 257, histidine 339, glutamate 384, and glutamate 423 together coordinate Mn(2+).

Belongs to the peptidase M24B family. Bacterial-type prolidase subfamily. Mn(2+) serves as cofactor.

The catalysed reaction is Xaa-L-Pro dipeptide + H2O = an L-alpha-amino acid + L-proline. Its function is as follows. Splits dipeptides with a prolyl residue in the C-terminal position. The polypeptide is Xaa-Pro dipeptidase (Citrobacter koseri (strain ATCC BAA-895 / CDC 4225-83 / SGSC4696)).